The primary structure comprises 286 residues: Elongation factor Ts (286 aa).

The segment at 82-85 (TDFV) is involved in Mg(2+) ion dislocation from EF-Tu.

Belongs to the EF-Ts family.

The protein resides in the cytoplasm. Its function is as follows. Associates with the EF-Tu.GDP complex and induces the exchange of GDP to GTP. It remains bound to the aminoacyl-tRNA.EF-Tu.GTP complex up to the GTP hydrolysis stage on the ribosome. In Desulfovibrio desulfuricans (strain ATCC 27774 / DSM 6949 / MB), this protein is Elongation factor Ts.